Reading from the N-terminus, the 305-residue chain is Dihydroorotate dehydrogenase B (NAD(+)), catalytic subunit (305 aa).

FMN contacts are provided by residues serine 23 and 47-48; that span reads KG. Substrate-binding positions include lysine 47 and 71-75; that span reads NAIGL. 2 residues coordinate FMN: asparagine 101 and asparagine 129. Asparagine 129 is a substrate binding site. The active-site Nucleophile is the cysteine 132. Positions 167 and 193 each coordinate FMN. 194–195 is a binding site for substrate; the sequence is NT. Residues glycine 219, 245–246, and 267–268 contribute to the FMN site; these read GG and GT.

The protein belongs to the dihydroorotate dehydrogenase family. Type 1 subfamily. Heterotetramer of 2 PyrK and 2 PyrD type B subunits. Requires FMN as cofactor.

Its subcellular location is the cytoplasm. The catalysed reaction is (S)-dihydroorotate + NAD(+) = orotate + NADH + H(+). Its pathway is pyrimidine metabolism; UMP biosynthesis via de novo pathway; orotate from (S)-dihydroorotate (NAD(+) route): step 1/1. Catalyzes the conversion of dihydroorotate to orotate with NAD(+) as electron acceptor. This is Dihydroorotate dehydrogenase B (NAD(+)), catalytic subunit (pyrD) from Geobacter metallireducens (strain ATCC 53774 / DSM 7210 / GS-15).